The sequence spans 860 residues: Glucans biosynthesis glucosyltransferase H (860 aa).

A run of 6 helical transmembrane segments spans residues 141-161 (FILL…MKGI), 187-207 (VLPY…FCWV), 515-535 (VFLT…FLVL), 572-592 (LFST…MLIW), 599-619 (FGGV…SVLL), and 682-702 (FLWW…VSVI).

This sequence belongs to the glycosyltransferase 2 family. OpgH subfamily.

The protein localises to the cell inner membrane. It participates in glycan metabolism; osmoregulated periplasmic glucan (OPG) biosynthesis. Functionally, involved in the biosynthesis of osmoregulated periplasmic glucans (OPGs). The chain is Glucans biosynthesis glucosyltransferase H from Pseudomonas paraeruginosa (strain DSM 24068 / PA7) (Pseudomonas aeruginosa (strain PA7)).